A 233-amino-acid polypeptide reads, in one-letter code: Chaperone protein MrkB (233 aa).

The first 18 residues, 1–18, serve as a signal peptide directing secretion; that stretch reads MKRIALFFCFIFSFAAHA.

The protein belongs to the periplasmic pilus chaperone family.

The protein localises to the periplasm. Its function is as follows. Mediates assembly of pili by forming soluble multimeric complexes with pili subunits as an intermediate step in the assembly process. This protein is involved in type 3 pili assembly. In Klebsiella pneumoniae, this protein is Chaperone protein MrkB (mrkB).